The sequence spans 110 residues: Host transcription reprogramming factor 2 (110 aa).

A signal peptide spans 1-18 (MHLKASSILALLVIGANA). Residues 68-96 (IMCGYCGKRFWNKPDLEKHIKLKPSKGGH) form a C2H2-type zinc finger. Residues 88-110 (KLKPSKGGHKGQPYKEHSWNRPT) are disordered. Over residues 100–110 (PYKEHSWNRPT) the composition is skewed to basic and acidic residues.

The protein resides in the secreted. It localises to the host nucleus. In terms of biological role, secreted effector that translocates into the nuclei of host cells to reprogram the expression of immunity-associated genes by binding to effector binding elements (EBEs) in rice. Binds the 5'-CCACCTCC-3' EBE of promoters from targeted rice genes and probably recruits a yet to be determined host repressor. Causes ambivalent immunity with increased susceptibility to the hemibiotrophic pathogens Magnaporthe oryzae and Xanthomonas oryzae pv. oryzae, but enhances resistance to Cochliobolus miyabeanus, a necrotrophic pathogen. In Pyricularia oryzae (strain 70-15 / ATCC MYA-4617 / FGSC 8958) (Rice blast fungus), this protein is Host transcription reprogramming factor 2.